Consider the following 310-residue polypeptide: N-acetyl-gamma-glutamyl-phosphate reductase (310 aa).

Residue Cys117 is part of the active site.

Belongs to the NAGSA dehydrogenase family. Type 2 subfamily.

It localises to the cytoplasm. It catalyses the reaction N-acetyl-L-glutamate 5-semialdehyde + phosphate + NADP(+) = N-acetyl-L-glutamyl 5-phosphate + NADPH + H(+). The protein operates within amino-acid biosynthesis; L-arginine biosynthesis; N(2)-acetyl-L-ornithine from L-glutamate: step 3/4. Catalyzes the NADPH-dependent reduction of N-acetyl-5-glutamyl phosphate to yield N-acetyl-L-glutamate 5-semialdehyde. The chain is N-acetyl-gamma-glutamyl-phosphate reductase from Rhizobium etli (strain ATCC 51251 / DSM 11541 / JCM 21823 / NBRC 15573 / CFN 42).